A 236-amino-acid chain; its full sequence is MGDTALHLVAAPALEATGLQVARGGRPLFRGLGFRLARGGLLCVRGANGSGKTTLLRTLAGLSRPHRGRILRAGRCIRQAANDHRGTLQYRGHRDGLRGALTVLENLQWQAALYHHRPDREAVRTALAGMGMARHLDTLASQLSQGQRRRVVLASLALFPRCRLWLLDEPQAALDVEGAERFHALLARHCQEGGAVVACSHQHLRIGGIPCDELWLSDPAPAGARSAGDRVTGTEA.

The ABC transporter domain maps to 14 to 235 (LEATGLQVAR…SAGDRVTGTE (222 aa)). 46–53 (GANGSGKT) contributes to the ATP binding site.

It belongs to the ABC transporter superfamily. CcmA exporter (TC 3.A.1.107) family. The complex is composed of two ATP-binding proteins (CcmA) and two transmembrane proteins (CcmB).

It localises to the cell inner membrane. The catalysed reaction is heme b(in) + ATP + H2O = heme b(out) + ADP + phosphate + H(+). Its function is as follows. Part of the ABC transporter complex CcmAB involved in the biogenesis of c-type cytochromes; once thought to export heme, this seems not to be the case, but its exact role is uncertain. Responsible for energy coupling to the transport system. The protein is Cytochrome c biogenesis ATP-binding export protein CcmA of Alkalilimnicola ehrlichii (strain ATCC BAA-1101 / DSM 17681 / MLHE-1).